The sequence spans 461 residues: Ribitol-5-phosphate transferase FKTN (461 aa).

The Cytoplasmic segment spans residues 1–7; that stretch reads MSRINKN. The interval 6-27 is required and sufficient for interaction with POMGNT1; it reads KNVVLALLTLTSSAFLLFQLYY. A helical; Signal-anchor for type II membrane protein membrane pass occupies residues 8-28; sequence VVLALLTLTSSAFLLFQLYYY. At 29–461 the chain is on the lumenal side; it reads KHYLSTRNGA…SEWDEVIQLY (433 aa). Residue N92 is glycosylated (N-linked (GlcNAc...) asparagine).

The protein belongs to the LicD transferase family. As to quaternary structure, forms a complex composed of FKTN/fukutin, FKRP and RXYLT1/TMEM5. Interacts (via transmembrane domain) with POMGNT1; the interaction is direct and is required for normal POMGNT1 location in Golgi membranes. As to expression, expressed in the retina (at protein level).

It is found in the golgi apparatus membrane. It localises to the cytoplasm. The protein localises to the nucleus. It catalyses the reaction 3-O-[beta-D-GalNAc-(1-&gt;3)-beta-D-GlcNAc-(1-&gt;4)-(O-6-P-alpha-D-Man)]-Thr-[protein] + CDP-L-ribitol = 3-O-[Rib-ol-P-3-beta-D-GalNAc-(1-&gt;3)-beta-D-GlcNAc-(1-&gt;4)-(O-6-P-alpha-D-Man)]-Thr-[protein] + CMP + H(+). It participates in protein modification; protein glycosylation. Its function is as follows. Catalyzes the transfer of CDP-ribitol to the distal N-acetylgalactosamine of the phosphorylated O-mannosyl trisaccharide (N-acetylgalactosamine-beta-3-N-acetylglucosamine-beta-4-(phosphate-6-)mannose), a carbohydrate structure present in alpha-dystroglycan (DAG1). This constitutes the first step in the formation of the ribitol 5-phosphate tandem repeat which links the phosphorylated O-mannosyl trisaccharide to the ligand binding moiety composed of repeats of 3-xylosyl-alpha-1,3-glucuronic acid-beta-1. May interact with and reinforce a large complex encompassing the outside and inside of muscle membranes. Could be involved in brain development. The protein is Ribitol-5-phosphate transferase FKTN of Macaca fascicularis (Crab-eating macaque).